Consider the following 54-residue polypeptide: Relaxin (54 aa).

Pyrrolidone carboxylic acid is present on Q1. 3 disulfide bridges follow: C13–C41, C25–C54, and C40–C45.

Belongs to the insulin family. Heterodimer of a B chain and an A chain linked by two disulfide bonds.

The protein resides in the secreted. The function of relaxin in an oviparous species is not yet known. The polypeptide is Relaxin (Squalus acanthias (Spiny dogfish)).